The following is a 97-amino-acid chain: Large ribosomal subunit protein uL23 (97 aa).

Belongs to the universal ribosomal protein uL23 family. Part of the 50S ribosomal subunit. Contacts protein L29, and trigger factor when it is bound to the ribosome.

In terms of biological role, one of the early assembly proteins it binds 23S rRNA. One of the proteins that surrounds the polypeptide exit tunnel on the outside of the ribosome. Forms the main docking site for trigger factor binding to the ribosome. The chain is Large ribosomal subunit protein uL23 from Brucella canis (strain ATCC 23365 / NCTC 10854 / RM-666).